A 459-amino-acid polypeptide reads, in one-letter code: MLEFDTITAIATVLGEGGISIIRISGENSLSIANSIFRGKNHRDLLDIKPYSMRYGFIIEKDTGEILDEVLVSFMKGPKSYTAEDIVEINCHGGVLATRKVMEEVIKAGARLAEPGEFTKRAFLNGRIDLSQAEAVIDIIRAKSHISVKSAVQQSQGKISKEINLLREELLEIIAHIEATVNYPEEDLEEMTSDQIYLKINKILDEINYILSNAEEGKIVREGLSVVIVGKPNVGKSSLLNSLIEENKAIVTDIPGTTRDVIEEYMNIGGIPIKIVDTAGIRKTDDIVEKIGVEKSKEKIDESDLVILMLDSSKELDEEDKEIINYVNHRKYIILLNKTDIGDKIDLNDICNLNSRFIIKTSIKNGEGLDKIKNCIKELFFKGEIKSEDLFITNTRHKEGLIRAKESCIEALQTLKSTLSIDLVSIDIKNAWINLGKITGDTLEEDIIDKIFSQFCLGK.

Residues Arg-23, Glu-88, and Arg-127 each coordinate (6S)-5-formyl-5,6,7,8-tetrahydrofolate. The 159-residue stretch at 223-381 (GLSVVIVGKP…IKNCIKELFF (159 aa)) folds into the TrmE-type G domain. K(+) is bound at residue Asn-233. GTP is bound by residues 233-238 (NVGKSS), 252-258 (TDIPGTT), and 277-280 (DTAG). Position 237 (Ser-237) interacts with Mg(2+). Positions 252, 254, and 257 each coordinate K(+). Thr-258 provides a ligand contact to Mg(2+). Position 459 (Lys-459) interacts with (6S)-5-formyl-5,6,7,8-tetrahydrofolate.

This sequence belongs to the TRAFAC class TrmE-Era-EngA-EngB-Septin-like GTPase superfamily. TrmE GTPase family. As to quaternary structure, homodimer. Heterotetramer of two MnmE and two MnmG subunits. The cofactor is K(+).

The protein resides in the cytoplasm. In terms of biological role, exhibits a very high intrinsic GTPase hydrolysis rate. Involved in the addition of a carboxymethylaminomethyl (cmnm) group at the wobble position (U34) of certain tRNAs, forming tRNA-cmnm(5)s(2)U34. This chain is tRNA modification GTPase MnmE, found in Clostridium kluyveri (strain ATCC 8527 / DSM 555 / NBRC 12016 / NCIMB 10680 / K1).